The following is a 213-amino-acid chain: MKKVLLLLFVLTIGLALSACSQSSDASEKEKPKEKKSQEELEKELDKELKKGGEPKTKKDDQIHKIGETFKAGHTNFTVNKVDRVQKGEYMNVGGAVNEETKTIKDDEERLIIEVTMENIGEDSISYNFIGFDLRDKNDQSVRPVFSIEEKGRILMGGTLVSGKKVTGVLSYVIPKGEQKHYTLVYNPFLADTNSSNTEERVKDDIDYLVKLD.

The first 19 residues, 1-19 (MKKVLLLLFVLTIGLALSA), serve as a signal peptide directing secretion. C20 carries N-palmitoyl cysteine lipidation. A lipid anchor (S-diacylglycerol cysteine) is attached at C20. The interval 20-62 (CSQSSDASEKEKPKEKKSQEELEKELDKELKKGGEPKTKKDDQ) is disordered. Basic and acidic residues predominate over residues 26-62 (ASEKEKPKEKKSQEELEKELDKELKKGGEPKTKKDDQ).

It localises to the cell membrane. This is an uncharacterized protein from Bacillus subtilis (strain 168).